Reading from the N-terminus, the 203-residue chain is Pyrrolidone-carboxylate peptidase (203 aa).

Active-site residues include glutamate 78, cysteine 141, and histidine 165.

Belongs to the peptidase C15 family. Homotetramer.

It is found in the cytoplasm. The enzyme catalyses Release of an N-terminal pyroglutamyl group from a polypeptide, the second amino acid generally not being Pro.. Its function is as follows. Removes 5-oxoproline from various penultimate amino acid residues except L-proline. This is Pyrrolidone-carboxylate peptidase from Thermoanaerobacter pseudethanolicus (strain ATCC 33223 / 39E) (Clostridium thermohydrosulfuricum).